The chain runs to 95 residues: Putative septation protein SpoVG (95 aa).

The protein belongs to the SpoVG family.

In terms of biological role, could be involved in septation. The protein is Putative septation protein SpoVG of Brevibacillus brevis (strain 47 / JCM 6285 / NBRC 100599).